A 350-amino-acid chain; its full sequence is Transcription factor MYB102 (350 aa).

HTH myb-type domains are found at residues 9-65 (KNGL…RPDI) and 66-116 (KRGR…RKKL). 2 consecutive DNA-binding regions (H-T-H motif) follow at residues 37-61 (WRTL…TNYL) and 89-112 (WSAI…NTHI).

In terms of tissue distribution, expressed in rosette leaves, cauline leaves and flowers.

It localises to the nucleus. Functionally, probable transcription factor that may function in osmotic stress and wounding signaling pathways. Contributes to basal resistance against the herbivore Pieris rapae (white cabbage butterfly) feeding. This chain is Transcription factor MYB102, found in Arabidopsis thaliana (Mouse-ear cress).